We begin with the raw amino-acid sequence, 182 residues long: Protein Syd (182 aa).

The protein belongs to the Syd family.

The protein resides in the cell inner membrane. Its function is as follows. Interacts with the SecY protein in vivo. May bind preferentially to an uncomplexed state of SecY, thus functioning either as a chelating agent for excess SecY in the cell or as a regulatory factor that negatively controls the translocase function. In Pectobacterium carotovorum subsp. carotovorum (strain PC1), this protein is Protein Syd.